A 90-amino-acid polypeptide reads, in one-letter code: Probable Fe(2+)-trafficking protein (90 aa).

Belongs to the Fe(2+)-trafficking protein family.

Could be a mediator in iron transactions between iron acquisition and iron-requiring processes, such as synthesis and/or repair of Fe-S clusters in biosynthetic enzymes. The chain is Probable Fe(2+)-trafficking protein from Albidiferax ferrireducens (strain ATCC BAA-621 / DSM 15236 / T118) (Rhodoferax ferrireducens).